The chain runs to 287 residues: Glycine--tRNA ligase alpha subunit (287 aa).

The protein belongs to the class-II aminoacyl-tRNA synthetase family. As to quaternary structure, tetramer of two alpha and two beta subunits.

It localises to the cytoplasm. The catalysed reaction is tRNA(Gly) + glycine + ATP = glycyl-tRNA(Gly) + AMP + diphosphate. The polypeptide is Glycine--tRNA ligase alpha subunit (Campylobacter jejuni subsp. doylei (strain ATCC BAA-1458 / RM4099 / 269.97)).